Reading from the N-terminus, the 398-residue chain is Acetate kinase (398 aa).

Asn10 serves as a coordination point for Mg(2+). Residue Lys17 participates in ATP binding. A substrate-binding site is contributed by Arg89. Asp148 (proton donor/acceptor) is an active-site residue. ATP contacts are provided by residues 208 to 212, 283 to 285, and 331 to 335; these read HLGNG, DCR, and GIGEN. Mg(2+) is bound at residue Glu385.

Belongs to the acetokinase family. Homodimer. Mg(2+) is required as a cofactor. Mn(2+) serves as cofactor.

Its subcellular location is the cytoplasm. It carries out the reaction acetate + ATP = acetyl phosphate + ADP. It participates in metabolic intermediate biosynthesis; acetyl-CoA biosynthesis; acetyl-CoA from acetate: step 1/2. Functionally, catalyzes the formation of acetyl phosphate from acetate and ATP. Can also catalyze the reverse reaction. This chain is Acetate kinase, found in Histophilus somni (strain 129Pt) (Haemophilus somnus).